Here is a 185-residue protein sequence, read N- to C-terminus: Ribosome-recycling factor (185 aa).

It belongs to the RRF family.

It localises to the cytoplasm. In terms of biological role, responsible for the release of ribosomes from messenger RNA at the termination of protein biosynthesis. May increase the efficiency of translation by recycling ribosomes from one round of translation to another. The protein is Ribosome-recycling factor of Listeria innocua serovar 6a (strain ATCC BAA-680 / CLIP 11262).